Reading from the N-terminus, the 1017-residue chain is Sodium/potassium-transporting ATPase subunit alpha-2 (1017 aa).

Positions Met1–Lys31 are disordered. Topologically, residues Met1–Pro82 are cytoplasmic. The tract at residues Pro77 to Pro79 is interaction with phosphoinositide-3 kinase. A helical transmembrane segment spans residues Glu83–Ala103. Residues Ile104 to Tyr126 lie on the Extracellular side of the membrane. A helical membrane pass occupies residues Leu127 to Ala147. Topologically, residues Lys148–Ile283 are cytoplasmic. Residues Lys207–His228 are disordered. The span at Asp209–Pro224 shows a compositional bias: polar residues. A helical membrane pass occupies residues Glu284 to Ile303. The Extracellular portion of the chain corresponds to Leu304–Ala315. A helical membrane pass occupies residues Val316 to Ala333. At Thr334 to Leu766 the chain is on the cytoplasmic side. Catalysis depends on Asp371, which acts as the 4-aspartylphosphate intermediate. Lys502 contributes to the ATP binding site. Positions 711 and 715 each coordinate Mg(2+). Residues Lys767 to Leu786 form a helical membrane-spanning segment. The Extracellular portion of the chain corresponds to Phe787 to Leu796. A helical transmembrane segment spans residues Gly797–Ala817. Over Tyr818–Lys837 the chain is Cytoplasmic. A helical membrane pass occupies residues Leu838–Phe860. Residues Phe861 to Cys912 are Extracellular-facing. Residues His913–Lys932 form a helical membrane-spanning segment. At Thr933–Asn945 the chain is on the cytoplasmic side. A Phosphoserine; by PKA modification is found at Ser937. A helical membrane pass occupies residues Lys946–Tyr964. The Extracellular portion of the chain corresponds to Cys965–Val979. Residues Thr980–Lys1000 form a helical membrane-spanning segment. Over Leu1001–Tyr1017 the chain is Cytoplasmic.

This sequence belongs to the cation transport ATPase (P-type) (TC 3.A.3) family. Type IIC subfamily. In terms of assembly, the sodium/potassium-transporting ATPase is composed of a catalytic alpha subunit, an auxiliary non-catalytic beta subunit and an additional regulatory subunit.

The protein localises to the membrane. It is found in the cell membrane. It catalyses the reaction K(+)(out) + Na(+)(in) + ATP + H2O = K(+)(in) + Na(+)(out) + ADP + phosphate + H(+). Functionally, this is the catalytic component of the active enzyme, which catalyzes the hydrolysis of ATP coupled with the exchange of sodium and potassium ions across the plasma membrane. This action creates the electrochemical gradient of sodium and potassium ions, providing the energy for active transport of various nutrients. This Gallus gallus (Chicken) protein is Sodium/potassium-transporting ATPase subunit alpha-2 (ATP1A2).